Reading from the N-terminus, the 404-residue chain is MAWSTRTMMSLALYTCFLWLLTSGLKTVQSLHDSHRGLAPTNVDFAFNMYRHLSTLDPHKNILISPVSVSMALAMMSLVAVGSKKNQFFQDVGFNLTEISKEEIYQSFEKLSHLLSKADSSLEMRMGNTMFLDQSLNMRDSFLTDIEHYHESEALTTDFKDGADAREHINRHVETKTQGEITHVFSDQDSPAPLTLVNYNVLKGMWELPISPENTRDEDFHVSENSTVRVPMMFQSGVIGYLHDSEIPCQLVQMQYLKNGTTFFILPDEGQMDAVTAALHRDTVERWDKLLTKRLVNLYIPRVYMSGTYNLEDVLEGMGITGLFTNQTDFLDISQDPPQKASKIVHKVMLQLDEKDEPPVTTTEAPPQTTSEPLTLTFNKPFIIMMFDSFTWSSLLLGKIMNPA.

A signal peptide spans 1–30; that stretch reads MAWSTRTMMSLALYTCFLWLLTSGLKTVQS. N95 and N225 each carry an N-linked (GlcNAc...) asparagine glycan. A cortisol-binding site is contributed by Q253. An N-linked (GlcNAc...) asparagine glycan is attached at N259. Residue E285 coordinates cortisol. The N-linked (GlcNAc...) asparagine glycan is linked to N326. W392 lines the cortisol pocket.

This sequence belongs to the serpin family. As to expression, expressed by the liver; secreted in plasma.

The protein localises to the secreted. In terms of biological role, major transport protein for glucocorticoids and progestins in the blood of almost all vertebrate species. The protein is Corticosteroid-binding globulin (SERPINA6) of Mesocricetus auratus (Golden hamster).